Reading from the N-terminus, the 200-residue chain is Nascent polypeptide-associated complex subunit alpha (200 aa).

Residues 1–19 (MADPRIEELPDEETKKPTV) are compositionally biased toward basic and acidic residues. 2 disordered regions span residues 1–52 (MADP…SRNE) and 120–165 (QQLA…EDKD). Over residues 20 to 34 (EELDESSDEESDAEA) the composition is skewed to acidic residues. Positions 49-114 (SRNEKKARKA…AKIEDLNASA (66 aa)) constitute an NAC-A/B domain. Residues 127 to 143 (AEHDHAGHTHDHKHEAA) show a composition bias toward basic and acidic residues. The span at 144–160 (KEEEEEEDDGEEVDAEG) shows a compositional bias: acidic residues. Positions 161-200 (IEDKDIELVMTQANVSRKKAIKALKENDNDIVNSIMALSV) constitute a UBA domain.

This sequence belongs to the NAC-alpha family. In terms of assembly, part of the nascent polypeptide-associated complex (NAC), consisting of EGD2 and EGD1. NAC associates with ribosomes via EGD1.

The protein resides in the cytoplasm. The protein localises to the nucleus. Its function is as follows. Component of the nascent polypeptide-associated complex (NAC), a dynamic component of the ribosomal exit tunnel, protecting the emerging polypeptides from interaction with other cytoplasmic proteins to ensure appropriate nascent protein targeting. The NAC complex also promotes mitochondrial protein import by enhancing productive ribosome interactions with the outer mitochondrial membrane and blocks the inappropriate interaction of ribosomes translating non-secretory nascent polypeptides with translocation sites in the membrane of the endoplasmic reticulum. EGD2 may also be involved in transcription regulation. This Chaetomium globosum (strain ATCC 6205 / CBS 148.51 / DSM 1962 / NBRC 6347 / NRRL 1970) (Soil fungus) protein is Nascent polypeptide-associated complex subunit alpha (EGD2).